A 352-amino-acid polypeptide reads, in one-letter code: Histidinol-phosphate aminotransferase (352 aa).

N6-(pyridoxal phosphate)lysine is present on Lys-221.

The protein belongs to the class-II pyridoxal-phosphate-dependent aminotransferase family. Histidinol-phosphate aminotransferase subfamily. As to quaternary structure, homodimer. It depends on pyridoxal 5'-phosphate as a cofactor.

It carries out the reaction L-histidinol phosphate + 2-oxoglutarate = 3-(imidazol-4-yl)-2-oxopropyl phosphate + L-glutamate. Its pathway is amino-acid biosynthesis; L-histidine biosynthesis; L-histidine from 5-phospho-alpha-D-ribose 1-diphosphate: step 7/9. In Staphylococcus aureus (strain Mu3 / ATCC 700698), this protein is Histidinol-phosphate aminotransferase.